Reading from the N-terminus, the 277-residue chain is Trypsin-2 (277 aa).

The signal sequence occupies residues 1–19 (MSNKIAILLLAVVVAVVAC). Residues 20-50 (AQAQPSRRHHLVHPLLPRFLPRLHRDSNGHR) constitute a propeptide, activation peptide. The Peptidase S1 domain occupies 51-276 (VVGGFQIDVS…VRDWVRENSG (226 aa)). An intrachain disulfide couples Cys76 to Cys92. Catalysis depends on charge relay system residues His91 and Asp136. Intrachain disulfides connect Cys201–Cys217 and Cys228–Cys252. The Charge relay system role is filled by Ser232.

It belongs to the peptidase S1 family. As to expression, midgut.

The protein resides in the secreted. It carries out the reaction Preferential cleavage: Arg-|-Xaa, Lys-|-Xaa.. Functionally, major function may be to aid in digestion of the blood meal. The chain is Trypsin-2 (TRYP2) from Anopheles gambiae (African malaria mosquito).